The sequence spans 535 residues: 5,6-dihydroxyindole-2-carboxylic acid oxidase (535 aa).

Positions 1 to 23 (MQLPMLLLVSLPLLLNMFKPAEA) are cleaved as a signal peptide. Residues 24–478 (QFPRQCATIE…GPLRVTEMIT (455 aa)) lie on the Lumenal, melanosome side of the membrane. Cystine bridges form between Cys29/Cys40, Cys41/Cys64, Cys55/Cys98, Cys100/Cys109, and Cys112/Cys121. N-linked (GlcNAc...) asparagine glycans are attached at residues Asn95 and Asn103. The N-linked (GlcNAc...) asparagine glycan is linked to Asn180. Residues His191, His214, and His223 each contribute to the Zn(2+) site. 2 cysteine pairs are disulfide-bonded: Cys257–Cys260 and Cys289–Cys302. N-linked (GlcNAc...) asparagine glycosylation is found at Asn303 and Asn349. Residues His376 and His380 each contribute to the Zn(2+) site. An N-linked (GlcNAc...) asparagine glycan is attached at Asn384. His403 contacts Zn(2+). A helical transmembrane segment spans residues 479 to 499 (IAIVTALVLVAIIFAAAACIV). The Cytoplasmic portion of the chain corresponds to 500–535 (RAKKNRDELHQPLLTDQYQHYSDDYDGIATPSQSVV).

This sequence belongs to the tyrosinase family. As to quaternary structure, tyrosinase, TYRP1 and TYRP2 may form a multienzyme complex. It depends on Cu(2+) as a cofactor. Zn(2+) is required as a cofactor.

The protein resides in the melanosome membrane. It catalyses the reaction 2 5,6-dihydroxyindole-2-carboxylate + O2 = 2 indole-5,6-quinone-2-carboxylate + 2 H2O. It participates in pigment biosynthesis; melanin biosynthesis. Plays a role in melanin biosynthesis. Catalyzes the oxidation of 5,6-dihydroxyindole-2-carboxylic acid (DHICA) into indole-5,6-quinone-2-carboxylic acid. May regulate or influence the type of melanin synthesized. Also to a lower extent, capable of hydroxylating tyrosine and producing melanin. In Gallus gallus (Chicken), this protein is 5,6-dihydroxyindole-2-carboxylic acid oxidase (TYRP1).